A 124-amino-acid polypeptide reads, in one-letter code: Small ribosomal subunit protein uS12 (124 aa).

Belongs to the universal ribosomal protein uS12 family. As to quaternary structure, part of the 30S ribosomal subunit. Contacts proteins S8 and S17. May interact with IF1 in the 30S initiation complex.

In terms of biological role, with S4 and S5 plays an important role in translational accuracy. Functionally, interacts with and stabilizes bases of the 16S rRNA that are involved in tRNA selection in the A site and with the mRNA backbone. Located at the interface of the 30S and 50S subunits, it traverses the body of the 30S subunit contacting proteins on the other side and probably holding the rRNA structure together. The combined cluster of proteins S8, S12 and S17 appears to hold together the shoulder and platform of the 30S subunit. This chain is Small ribosomal subunit protein uS12, found in Photorhabdus laumondii subsp. laumondii (strain DSM 15139 / CIP 105565 / TT01) (Photorhabdus luminescens subsp. laumondii).